We begin with the raw amino-acid sequence, 442 residues long: UDP-N-acetylmuramate--L-alanine ligase (442 aa).

Residue 110–116 (GAHGKTS) coordinates ATP.

It belongs to the MurCDEF family.

It is found in the cytoplasm. The catalysed reaction is UDP-N-acetyl-alpha-D-muramate + L-alanine + ATP = UDP-N-acetyl-alpha-D-muramoyl-L-alanine + ADP + phosphate + H(+). Its pathway is cell wall biogenesis; peptidoglycan biosynthesis. Cell wall formation. The chain is UDP-N-acetylmuramate--L-alanine ligase from Streptococcus thermophilus (strain ATCC BAA-491 / LMD-9).